A 744-amino-acid chain; its full sequence is Protein zyg-11 homolog B (744 aa).

LRR repeat units follow at residues 185-208 (LPRLESLDISNTSITDITALLACK), 216-236 (MHHLKCLKMTTTQILDVVREL), and 237-261 (KHLNHLDISDDKQFTSDIALRLLEQ).

It belongs to the zyg-11 family. Interacts with ELOC/Elongin C. Part of an E3 ubiquitin ligase complex including ZYG11B, CUL2 and Elongin BC.

Serves as substrate adapter subunit in the E3 ubiquitin ligase complex ZYG11B-CUL2-Elongin BC. Acts redudantly with ZER1 to target substrates bearing N-terminal glycine degrons for proteasomal degradation. Involved in the clearance of proteolytic fragments generated by caspase cleavage during apoptosis since N-terminal glycine degrons are strongly enriched at caspase cleavage sites. Also important in the quality control of protein N-myristoylation in which N-terminal glycine degrons are conditionally exposed after a failure of N-myristoylation. In Mus musculus (Mouse), this protein is Protein zyg-11 homolog B.